A 251-amino-acid polypeptide reads, in one-letter code: Triosephosphate isomerase (251 aa).

9–11 (NWK) contributes to the substrate binding site. Histidine 95 acts as the Electrophile in catalysis. The Proton acceptor role is filled by glutamate 167. Substrate is bound by residues glycine 173, serine 213, and 234 to 235 (GG).

The protein belongs to the triosephosphate isomerase family. In terms of assembly, homodimer.

The protein localises to the cytoplasm. It carries out the reaction D-glyceraldehyde 3-phosphate = dihydroxyacetone phosphate. The protein operates within carbohydrate biosynthesis; gluconeogenesis. Its pathway is carbohydrate degradation; glycolysis; D-glyceraldehyde 3-phosphate from glycerone phosphate: step 1/1. In terms of biological role, involved in the gluconeogenesis. Catalyzes stereospecifically the conversion of dihydroxyacetone phosphate (DHAP) to D-glyceraldehyde-3-phosphate (G3P). In Pelobacter propionicus (strain DSM 2379 / NBRC 103807 / OttBd1), this protein is Triosephosphate isomerase.